A 205-amino-acid polypeptide reads, in one-letter code: Peptidyl-tRNA hydrolase (205 aa).

Residue tyrosine 14 participates in tRNA binding. Catalysis depends on histidine 19, which acts as the Proton acceptor. Positions 68, 70, and 116 each coordinate tRNA.

The protein belongs to the PTH family. Monomer.

It localises to the cytoplasm. The catalysed reaction is an N-acyl-L-alpha-aminoacyl-tRNA + H2O = an N-acyl-L-amino acid + a tRNA + H(+). In terms of biological role, hydrolyzes ribosome-free peptidyl-tRNAs (with 1 or more amino acids incorporated), which drop off the ribosome during protein synthesis, or as a result of ribosome stalling. Functionally, catalyzes the release of premature peptidyl moieties from peptidyl-tRNA molecules trapped in stalled 50S ribosomal subunits, and thus maintains levels of free tRNAs and 50S ribosomes. The chain is Peptidyl-tRNA hydrolase from Caulobacter vibrioides (strain ATCC 19089 / CIP 103742 / CB 15) (Caulobacter crescentus).